Reading from the N-terminus, the 442-residue chain is Proline--tRNA ligase (442 aa).

The protein belongs to the class-II aminoacyl-tRNA synthetase family. ProS type 2 subfamily. Homodimer.

Its subcellular location is the cytoplasm. It catalyses the reaction tRNA(Pro) + L-proline + ATP = L-prolyl-tRNA(Pro) + AMP + diphosphate. Its function is as follows. Catalyzes the attachment of proline to tRNA(Pro) in a two-step reaction: proline is first activated by ATP to form Pro-AMP and then transferred to the acceptor end of tRNA(Pro). The polypeptide is Proline--tRNA ligase (Sinorhizobium medicae (strain WSM419) (Ensifer medicae)).